A 288-amino-acid polypeptide reads, in one-letter code: Stage IV sporulation protein FB (288 aa).

The Mother cell cytoplasmic segment spans residues 1-10 (MNKWLDLILK). Residues 11–30 (IHVHPFLWIIAALGLLTGHM) form a helical membrane-spanning segment. Residue lysine 31 is a topological domain, forespore intermembrane space. A helical membrane pass occupies residues 32–56 (ALLCLLLIVLIHELGHAALAVFFSW). Histidine 43 lines the Zn(2+) pocket. Glutamate 44 is an active-site residue. Histidine 47 is a binding site for Zn(2+). The Mother cell cytoplasmic segment spans residues 57–83 (RIKRVFLLPFGGTVEVEEHGNRPLKEE). The helical transmembrane segment at 84 to 105 (FAVIIAGPLQHIWLQFAAWMLA) threads the bilayer. The Forespore intermembrane space segment spans residues 106–126 (EVSVIHQHTFELFTFYNLSIL). Residues 127-146 (FVNLLPIWPLDGGKLLFLLF) traverse the membrane as a helical segment. Position 137 (aspartate 137) interacts with Zn(2+). The Mother cell cytoplasmic segment spans residues 147 to 161 (SKQLPFQKAHRLNLK). A helical transmembrane segment spans residues 162 to 178 (TSLCFCLLLGCWVLFVI). Proline 179 is a topological domain (forespore intermembrane space). A helical transmembrane segment spans residues 180 to 199 (LQISAWVLFVFLAVSLFEEY). The Mother cell cytoplasmic portion of the chain corresponds to 200–288 (RQRHYIHVRF…SSMEELLLPY (89 aa)).

Belongs to the peptidase M50B family. Forms a complex with SpoIVFA and BofA localized in the mother-cell membrane surrounding the forespore. Zn(2+) is required as a cofactor.

The protein resides in the forespore outer membrane. Its function is as follows. Implicated in the coupling of mother cell to forespore gene expression. Required for spore formation. Processes the pro-sigma K factor. This Bacillus subtilis (strain 168) protein is Stage IV sporulation protein FB (spoIVFB).